We begin with the raw amino-acid sequence, 426 residues long: Glutamyl-tRNA reductase (426 aa).

Residues 52-55, Ser110, 115-117, and Gln121 each bind substrate; these read TCNR and EYE. The Nucleophile role is filled by Cys53. 190-195 is an NADP(+) binding site; it reads GAGEMG.

It belongs to the glutamyl-tRNA reductase family. Homodimer.

The enzyme catalyses (S)-4-amino-5-oxopentanoate + tRNA(Glu) + NADP(+) = L-glutamyl-tRNA(Glu) + NADPH + H(+). It functions in the pathway porphyrin-containing compound metabolism; protoporphyrin-IX biosynthesis; 5-aminolevulinate from L-glutamyl-tRNA(Glu): step 1/2. Functionally, catalyzes the NADPH-dependent reduction of glutamyl-tRNA(Glu) to glutamate 1-semialdehyde (GSA). This is Glutamyl-tRNA reductase from Saccharolobus islandicus (strain Y.N.15.51 / Yellowstone #2) (Sulfolobus islandicus).